The primary structure comprises 230 residues: Ribonuclease 3 (230 aa).

One can recognise an RNase III domain in the interval 1 to 134; it reads MKQLEELLST…FLGALLLDKG (134 aa). Glu47 serves as a coordination point for Mg(2+). Asp51 is a catalytic residue. Mg(2+) is bound by residues Asp120 and Glu123. Glu123 is an active-site residue. The region spanning 160–229 is the DRBM domain; the sequence is DYKTCLQEFL…AKNALAQLSE (70 aa).

This sequence belongs to the ribonuclease III family. In terms of assembly, homodimer. It depends on Mg(2+) as a cofactor.

It localises to the cytoplasm. The enzyme catalyses Endonucleolytic cleavage to 5'-phosphomonoester.. In terms of biological role, digests double-stranded RNA. Involved in the processing of primary rRNA transcript to yield the immediate precursors to the large and small rRNAs (23S and 16S). Processes some mRNAs, and tRNAs when they are encoded in the rRNA operon. Processes pre-crRNA and tracrRNA of type II CRISPR loci if present in the organism. The protein is Ribonuclease 3 of Streptococcus pyogenes serotype M49 (strain NZ131).